A 474-amino-acid polypeptide reads, in one-letter code: Trehalose-6-phosphate synthase (474 aa).

D-glucose 6-phosphate is bound at residue R10. 22–23 is a UDP-alpha-D-glucose binding site; the sequence is GG. Residues Y77 and D131 each coordinate D-glucose 6-phosphate. UDP-alpha-D-glucose contacts are provided by R263 and K268. R301 is a binding site for D-glucose 6-phosphate. UDP-alpha-D-glucose-binding positions include F340 and 366–370; that span reads LVAKE.

This sequence belongs to the glycosyltransferase 20 family. As to quaternary structure, homotetramer.

The catalysed reaction is D-glucose 6-phosphate + UDP-alpha-D-glucose = alpha,alpha-trehalose 6-phosphate + UDP + H(+). It participates in glycan biosynthesis; trehalose biosynthesis. Its function is as follows. Probably involved in the osmoprotection via the biosynthesis of trehalose. Catalyzes the transfer of glucose from UDP-alpha-D-glucose (UDP-Glc) to D-glucose 6-phosphate (Glc-6-P) to form trehalose-6-phosphate. Acts with retention of the anomeric configuration of the UDP-sugar donor. The chain is Trehalose-6-phosphate synthase from Escherichia coli O157:H7.